The following is a 749-amino-acid chain: Chaperone protein DnaK 1 (749 aa).

Thr198 carries the post-translational modification Phosphothreonine; by autocatalysis. Basic and acidic residues-rich tracts occupy residues 643-653 (RWDADPWDRSR), 661-694 (YDDR…RDRN), and 711-724 (PTWE…RDRS). The segment at 643 to 749 (RWDADPWDRS…GWDDDDDEWF (107 aa)) is disordered. The segment covering 740 to 749 (GWDDDDDEWF) has biased composition (acidic residues).

It belongs to the heat shock protein 70 family.

Its function is as follows. Acts as a chaperone. This chain is Chaperone protein DnaK 1, found in Synechococcus sp. (strain ATCC 27144 / PCC 6301 / SAUG 1402/1) (Anacystis nidulans).